Consider the following 147-residue polypeptide: Phosphoribosyl-AMP cyclohydrolase (147 aa).

Asp-91 contributes to the Mg(2+) binding site. Cys-92 is a Zn(2+) binding site. Asp-93 and Asp-95 together coordinate Mg(2+). Cys-108 and Cys-115 together coordinate Zn(2+).

The protein belongs to the PRA-CH family. In terms of assembly, homodimer. Requires Mg(2+) as cofactor. Zn(2+) is required as a cofactor.

The protein localises to the cytoplasm. The enzyme catalyses 1-(5-phospho-beta-D-ribosyl)-5'-AMP + H2O = 1-(5-phospho-beta-D-ribosyl)-5-[(5-phospho-beta-D-ribosylamino)methylideneamino]imidazole-4-carboxamide. Its pathway is amino-acid biosynthesis; L-histidine biosynthesis; L-histidine from 5-phospho-alpha-D-ribose 1-diphosphate: step 3/9. Its function is as follows. Catalyzes the hydrolysis of the adenine ring of phosphoribosyl-AMP. This Rhodopseudomonas palustris (strain BisB5) protein is Phosphoribosyl-AMP cyclohydrolase.